The chain runs to 311 residues: Tricarboxylate transport protein, mitochondrial (311 aa).

The propeptide at M1–A13 is removed in mature form. Solcar repeat units follow at residues T23–H111, T122–W208, and M218–L303. A run of 3 helical transmembrane segments spans residues I29–T46, G86–F105, and L129–M143. A Phosphoserine modification is found at S156. Transmembrane regions (helical) follow at residues G183–M202, G224–L241, and G278–Y297.

The protein belongs to the mitochondrial carrier (TC 2.A.29) family. Possesses a short cleavable presequence, which, however, is found to be dispensable both for targeting to mitochondria and insertion into the inner membrane. However, the presequence is required to keep SLC25A1 in a soluble state and thus in an import-competent state. Mature SLC25A1 lacking the presequence is prone to aggregation.

The protein localises to the mitochondrion inner membrane. The catalysed reaction is (S)-malate(in) + citrate(out) = (S)-malate(out) + citrate(in). The enzyme catalyses D-threo-isocitrate(in) + citrate(out) = D-threo-isocitrate(out) + citrate(in). It catalyses the reaction citrate(out) + succinate(in) = citrate(in) + succinate(out). It carries out the reaction cis-aconitate(in) + citrate(out) = cis-aconitate(out) + citrate(in). The catalysed reaction is trans-aconitate(in) + citrate(out) = trans-aconitate(out) + citrate(in). The enzyme catalyses phosphoenolpyruvate(in) + citrate(out) = phosphoenolpyruvate(out) + citrate(in). It catalyses the reaction maleate(in) + citrate(out) = maleate(out) + citrate(in). Its function is as follows. Mitochondrial electroneutral antiporter that exports citrate from the mitochondria into the cytosol in exchange for malate. Also able to mediate the exchange of citrate for isocitrate, phosphoenolpyruvate, cis-aconitate and to a lesser extent trans-aconitate, maleate and succinate. In the cytoplasm, citrate plays important roles in fatty acid and sterol synthesis, regulation of glycolysis, protein acetylation, and other physiopathological processes. This chain is Tricarboxylate transport protein, mitochondrial (SLC25A1), found in Homo sapiens (Human).